The primary structure comprises 23 residues: Septenin 2a (23 aa).

In terms of tissue distribution, expressed in skin glands.

Its subcellular location is the secreted. Its function is as follows. May act as an antimicrobial peptide. This chain is Septenin 2a, found in Osteopilus septentrionalis (Cuban treefrog).